Consider the following 163-residue polypeptide: Nucleotide-binding protein PM1656 (163 aa).

It belongs to the YajQ family.

Its function is as follows. Nucleotide-binding protein. The polypeptide is Nucleotide-binding protein PM1656 (Pasteurella multocida (strain Pm70)).